The primary structure comprises 197 residues: Suppressor of RNA silencing p3 (197 aa).

Belongs to the tenuiviruses p3 protein family. In terms of assembly, homodimer.

It localises to the host cytoplasm. In terms of biological role, acts as a suppressor of RNA-mediated gene silencing, also known as post-transcriptional gene silencing (PTGS), presumably through the binding of dsRNA. The protein is Suppressor of RNA silencing p3 of Rottboellia (Sorghum).